We begin with the raw amino-acid sequence, 563 residues long: BOS complex subunit NCLN (563 aa).

A signal peptide spans 1-42 (MLEEAGEVLENMLKASCLPLGFIVFLPAVLLLVAPPLPAADA). Over 43-522 (AHEFTVYRMQ…VMNAYRVKPA (480 aa)) the chain is Lumenal. Asn-241 and Asn-428 each carry an N-linked (GlcNAc...) asparagine glycan. A helical transmembrane segment spans residues 523-543 (IFDLLLAVCIGAYLGMAYTAV). The Cytoplasmic segment spans residues 544-563 (QHFDLLYKTVQRLLVKAKTQ).

It belongs to the nicastrin family. In terms of assembly, component of the back of Sec61 (BOS) complex, composed of NCLN/Nicalin, NOMO1 and TMEM147. The BOS complex is part of the multi-pass translocon (MPT) complex, composed of three subcomplexes, the GEL complex (composed of RAB5IF/OPTI and TMCO1), the BOS complex (composed of NCLN/Nicalin, NOMO1 and TMEM147) and the PAT complex (composed of WDR83OS/Asterix and CCDC47). The MPT complex associates with the SEC61 complex.

The protein localises to the endoplasmic reticulum membrane. Functionally, component of the multi-pass translocon (MPT) complex that mediates insertion of multi-pass membrane proteins into the lipid bilayer of membranes. The MPT complex takes over after the SEC61 complex: following membrane insertion of the first few transmembrane segments of proteins by the SEC61 complex, the MPT complex occludes the lateral gate of the SEC61 complex to promote insertion of subsequent transmembrane regions. May antagonize Nodal signaling and subsequent organization of axial structures during mesodermal patterning, via its interaction with NOMO. This is BOS complex subunit NCLN from Canis lupus familiaris (Dog).